Here is a 129-residue protein sequence, read N- to C-terminus: Small ribosomal subunit protein uS9 (129 aa).

The protein belongs to the universal ribosomal protein uS9 family.

The chain is Small ribosomal subunit protein uS9 from Helicobacter acinonychis (strain Sheeba).